A 332-amino-acid chain; its full sequence is L-lactate dehydrogenase A chain (332 aa).

Alanine 2 carries the N-acetylalanine modification. Lysine 5 carries the post-translational modification N6-acetyllysine; alternate. N6-succinyllysine; alternate is present on lysine 5. At lysine 14 the chain carries N6-acetyllysine. Residue 29–57 coordinates NAD(+); sequence GAVGMACAISILMKDLADEVALVDVMEDK. Lysine 57 is modified (N6-acetyllysine; alternate). Lysine 57 participates in a covalent cross-link: Glycyl lysine isopeptide (Lys-Gly) (interchain with G-Cter in SUMO2); alternate. N6-acetyllysine is present on lysine 81. A substrate-binding site is contributed by arginine 106. At lysine 118 the chain carries N6-acetyllysine; alternate. Lysine 118 is subject to N6-succinyllysine; alternate. Position 126 is an N6-acetyllysine (lysine 126). Asparagine 138 provides a ligand contact to NAD(+). Residues asparagine 138 and arginine 169 each coordinate substrate. The active-site Proton acceptor is histidine 193. N6-acetyllysine occurs at positions 224 and 232. Phosphotyrosine is present on tyrosine 239. Lysine 243 is subject to N6-acetyllysine. Threonine 248 contacts substrate. A Phosphothreonine modification is found at threonine 309. Lysine 318 is subject to N6-acetyllysine; alternate. At lysine 318 the chain carries N6-succinyllysine; alternate. A Phosphothreonine modification is found at threonine 322.

It belongs to the LDH/MDH superfamily. LDH family. In terms of assembly, homotetramer. Interacts with PTEN upstream reading frame protein MP31. Post-translationally, ISGylated.

The protein resides in the cytoplasm. It catalyses the reaction (S)-lactate + NAD(+) = pyruvate + NADH + H(+). The protein operates within fermentation; pyruvate fermentation to lactate; (S)-lactate from pyruvate: step 1/1. Functionally, interconverts simultaneously and stereospecifically pyruvate and lactate with concomitant interconversion of NADH and NAD(+). The polypeptide is L-lactate dehydrogenase A chain (LDHA) (Bos taurus (Bovine)).